The sequence spans 158 residues: Protein Smg homolog (158 aa).

This sequence belongs to the Smg family.

In Shewanella sp. (strain MR-4), this protein is Protein Smg homolog.